The sequence spans 984 residues: Ubiquitin conjugation factor E4 ufd-2 (984 aa).

The U-box domain maps to 909-982; sequence DVPEEFKDPI…QEWICQKRNS (74 aa).

Belongs to the ubiquitin conjugation factor E4 family. Forms a complex composed of deubiquitinating enzyme atx-3, E4 ubiquitin-protein ligase ufd-2 and cdc-48.1; within the complex interacts with atx-3 and cdc-48.1 (via DDDLYN motif). Forms a complex composed of cdc-48.1, myosin chaperone unc-45, ubiquitin-protein ligases ufd-2 and chn-1; the complex targets myosin chaperone unc-45 for proteasomal degradation; within the complex interacts with cdc-48.1 (via DDDLYN motif), chn-1 and unc-45. Forms a complex composed of unc-45 and myosin heavy chain B unc-54; the complex targets unfolded unc-54 for proteasomal degradation; within the complex interacts with unc-45 (via TPR domain) and unc-54. Interacts with cdc-48.2 (via DDDLYN motif). Expressed in the germline (at protein level).

The protein localises to the cytoplasm. Its subcellular location is the nucleus membrane. The protein resides in the nucleus. It is found in the nucleolus. The catalysed reaction is S-ubiquitinyl-[E2 ubiquitin-conjugating enzyme]-L-cysteine + [acceptor protein]-L-lysine = [E2 ubiquitin-conjugating enzyme]-L-cysteine + N(6)-ubiquitinyl-[acceptor protein]-L-lysine.. Its pathway is protein modification; protein ubiquitination. Its function is as follows. Acts as an E4 ubiquitin ligase mediating the assembly of polyubiquitin chains on substrates ubiquitinated by another E3 ubiquitin ligase. The elongation of preexisting ubiquitin chains preferentially targets ubiquitin 'Lys-29' and 'Lys-48' residues. Also functions as an E3 ligase in conjunction with specific E1 and E2 ligases. Probably by regulating protein ubiquitination at DNA damage repair sites, coordinates DNA double-strand-break repair and apoptosis in the germline. Required for germline apoptosis in response to DNA damage downstream of cep-1. Involved in the resolution of DNA-repair sites by promoting the release of rad-51 from DNA damage foci. In association with protein-ligase chn-1, acts as an E3/E4 ligase to poly-ubiquitinate lysine residues in the UCS domain of myosin chaperone unc-45. By targeting myosin chaperone unc-45 for proteasomal degradation, regulates myosin assembly in body wall muscles in association with cdc-48.1 and chn-1. However, in a contrasting study, acts as an E3 ligase, independently of chn-1, to poly-ubiquitinate unc-45 without promoting unc-45 proteasomal degradation. Instead, uses unc-45 as an adapter protein to recruit and poly-ubiquitinate unfolded myosin heavy chain B unc-54. The chain is Ubiquitin conjugation factor E4 ufd-2 from Caenorhabditis elegans.